The sequence spans 293 residues: Bifunctional protein FolD 1 (293 aa).

NADP(+)-binding positions include 174 to 176 (GRS) and Thr-240.

The protein belongs to the tetrahydrofolate dehydrogenase/cyclohydrolase family. As to quaternary structure, homodimer.

It carries out the reaction (6R)-5,10-methylene-5,6,7,8-tetrahydrofolate + NADP(+) = (6R)-5,10-methenyltetrahydrofolate + NADPH. It catalyses the reaction (6R)-5,10-methenyltetrahydrofolate + H2O = (6R)-10-formyltetrahydrofolate + H(+). Its pathway is one-carbon metabolism; tetrahydrofolate interconversion. Catalyzes the oxidation of 5,10-methylenetetrahydrofolate to 5,10-methenyltetrahydrofolate and then the hydrolysis of 5,10-methenyltetrahydrofolate to 10-formyltetrahydrofolate. In Saccharopolyspora erythraea (strain ATCC 11635 / DSM 40517 / JCM 4748 / NBRC 13426 / NCIMB 8594 / NRRL 2338), this protein is Bifunctional protein FolD 1.